A 1159-amino-acid chain; its full sequence is Phosphatidylinositol 3-kinase age-1 (1159 aa).

Positions 1–25 (MSMGRSSSTTFRNRTASHGSRSLGS) are enriched in polar residues. The interval 1–28 (MSMGRSSSTTFRNRTASHGSRSLGSAET) is disordered. Residues 79 to 179 (SEGVADMIVL…FPMLFLFEPD (101 aa)) enclose the PI3K-ABD domain. A PI3K-RBD domain is found at 272–363 (RKSEANEVWE…YRCPGFVVRR (92 aa)). One can recognise a C2 PI3K-type domain in the interval 430 to 588 (LDSNLMIRPV…VKMPNEAQYK (159 aa)). Residues 607-793 (DYEACIGDPG…SLLMEAYLRG (187 aa)) form the PIK helical domain. In terms of domain architecture, PI3K/PI4K catalytic spans 858 to 1159 (VIEKAIVLGS…NWLFHAMKHY (302 aa)). Residues 864–870 (VLGSAKQ) are G-loop. The interval 1028 to 1036 (GIKDRHSDN) is catalytic loop. The tract at residues 1047 to 1073 (HIDFGHILGHGKTKLGIQRDRQPFILT) is activation loop.

Belongs to the PI3/PI4-kinase family.

It catalyses the reaction a 1,2-diacyl-sn-glycero-3-phospho-(1D-myo-inositol) + ATP = a 1,2-diacyl-sn-glycero-3-phospho-(1D-myo-inositol-3-phosphate) + ADP + H(+). In terms of biological role, phosphatidylinositol 3-kinase homolog that regulates longevity and diapause. Promotes cell survival during embryonic development by recruiting akt-1/2 to the plasma membrane through the production of PtdIns(3,4,5)P3. Could function in the development or neuroendocrine signaling of the dauer pathway. Mediates susceptibility to enteropathogenic E.coli infection. May negatively regulate AYI interneuron neurite outgrowth. Plays a role in aversive olfactory learning when an odor is associated with food deprivation. Regulates this process by promoting the nuclear relocalization of egl-4 in AWC olfactory neurons after odor conditioning. The protein is Phosphatidylinositol 3-kinase age-1 (age-1) of Caenorhabditis briggsae.